Consider the following 180-residue polypeptide: Adenine phosphoribosyltransferase (180 aa).

Serine 2 bears the N-acetylserine mark. A phosphoserine mark is found at serine 15 and serine 30. At tyrosine 60 the chain carries Phosphotyrosine. Serine 66 is modified (phosphoserine). Lysine 114 is subject to N6-acetyllysine. Threonine 135 carries the post-translational modification Phosphothreonine.

Belongs to the purine/pyrimidine phosphoribosyltransferase family. Homodimer.

The protein localises to the cytoplasm. It catalyses the reaction AMP + diphosphate = 5-phospho-alpha-D-ribose 1-diphosphate + adenine. The protein operates within purine metabolism; AMP biosynthesis via salvage pathway; AMP from adenine: step 1/1. Functionally, catalyzes a salvage reaction resulting in the formation of AMP, that is energically less costly than de novo synthesis. This is Adenine phosphoribosyltransferase from Mus musculus (Mouse).